We begin with the raw amino-acid sequence, 349 residues long: N-acetyltaurine hydrolase (349 aa).

Positions 26, 28, 169, 201, 230, and 298 each coordinate a divalent metal cation.

Belongs to the metallo-dependent hydrolases superfamily. Phosphotriesterase family. A divalent metal cation is required as a cofactor. As to expression, expressed in the kidney, liver and brainstem.

It localises to the cytoplasm. Its subcellular location is the cytosol. It carries out the reaction N-acetyltaurine + H2O = taurine + acetate. The enzyme catalyses N-propanoyltaurine + H2O = propanoate + taurine. The catalysed reaction is N-acetyl-L-methionine + H2O = L-methionine + acetate. It catalyses the reaction N-acetyl-L-isoleucine + H2O = L-isoleucine + acetate. It carries out the reaction N-acetyl-L-leucine + H2O = L-leucine + acetate. The enzyme catalyses N-acetyl-L-valine + H2O = L-valine + acetate. Functionally, N-acetyltaurine hydrolase that regulates feeding by catalyzing the hydrolysis of N-acetyltaurine into taurine and acetate. N-acetyltaurine has anorexigenic and anti-obesity effects that are dependent on GFRAL receptor and GDF15. PTER also acts on other N-acetyl amino acids (Met, Ile, Leu, Val) and N-propionyltaurine, but at lower rates. The protein is N-acetyltaurine hydrolase of Mus musculus (Mouse).